We begin with the raw amino-acid sequence, 151 residues long: UPF0208 membrane protein Ent638_2839 (151 aa).

The next 2 helical transmembrane spans lie at 46-65 and 69-91; these read YAIRFMPPIAVFTLCWQIAL and LGPAVATALFALSLPMQGLWWLG.

It belongs to the UPF0208 family.

Its subcellular location is the cell inner membrane. This chain is UPF0208 membrane protein Ent638_2839, found in Enterobacter sp. (strain 638).